Here is a 620-residue protein sequence, read N- to C-terminus: UvrABC system protein C (620 aa).

Residues 13–92 (DKPGVYIMKN…IKKYSPRYNI (80 aa)) form the GIY-YIG domain. A UVR domain is found at 204-239 (TSIIKKLKLEMEKAAEELEFEKAAKIRDRILAIELI).

Belongs to the UvrC family. Interacts with UvrB in an incision complex.

The protein resides in the cytoplasm. In terms of biological role, the UvrABC repair system catalyzes the recognition and processing of DNA lesions. UvrC both incises the 5' and 3' sides of the lesion. The N-terminal half is responsible for the 3' incision and the C-terminal half is responsible for the 5' incision. The protein is UvrABC system protein C of Clostridium perfringens (strain ATCC 13124 / DSM 756 / JCM 1290 / NCIMB 6125 / NCTC 8237 / Type A).